Consider the following 768-residue polypeptide: Probable LRR receptor-like serine/threonine-protein kinase At4g37250 (768 aa).

An N-terminal signal peptide occupies residues methionine 1 to alanine 21. Residues leucine 22 to glycine 328 are Extracellular-facing. A glycan (N-linked (GlcNAc...) asparagine) is linked at asparagine 64. LRR repeat units follow at residues lysine 67 to leucine 90, threonine 91 to asparagine 112, glutamate 115 to leucine 137, asparagine 139 to arginine 162, asparagine 163 to arginine 183, valine 184 to tyrosine 206, serine 207 to asparagine 229, and arginine 232 to leucine 254. The N-linked (GlcNAc...) asparagine glycan is linked to asparagine 99. Residues asparagine 144, asparagine 163, asparagine 196, asparagine 212, asparagine 233, and asparagine 242 are each glycosylated (N-linked (GlcNAc...) asparagine). The tract at residues proline 301 to glycine 324 is disordered. The span at threonine 303–asparagine 320 shows a compositional bias: polar residues. A helical membrane pass occupies residues valine 329–leucine 349. The Cytoplasmic portion of the chain corresponds to tyrosine 350–histidine 768. Positions aspartate 361–lysine 432 are disordered. Positions serine 378–proline 387 are enriched in low complexity. Over residues proline 407–serine 420 the composition is skewed to acidic residues. The Protein kinase domain maps to lysine 449–serine 756. A phosphoserine mark is found at serine 451 and serine 531. Threonine 553 carries the post-translational modification Phosphothreonine. Serine 662 bears the Phosphoserine mark.

It belongs to the protein kinase superfamily. Ser/Thr protein kinase family.

It localises to the membrane. It carries out the reaction L-seryl-[protein] + ATP = O-phospho-L-seryl-[protein] + ADP + H(+). The catalysed reaction is L-threonyl-[protein] + ATP = O-phospho-L-threonyl-[protein] + ADP + H(+). The protein is Probable LRR receptor-like serine/threonine-protein kinase At4g37250 of Arabidopsis thaliana (Mouse-ear cress).